The following is a 491-amino-acid chain: Cytosolic Fe-S cluster assembly factor NAR1 (491 aa).

Residues C20, C59, C62, C65, C177, C231, C412, and C416 each coordinate [4Fe-4S] cluster.

Belongs to the NARF family. Interacts with CIA1.

Its function is as follows. Component of the cytosolic Fe/S protein assembly machinery. Required for maturation of extramitochondrial Fe/S proteins. May play a role in the transfer of pre-assembled Fe/S clusters to target apoproteins. This is Cytosolic Fe-S cluster assembly factor NAR1 (NAR1) from Saccharomyces cerevisiae (strain YJM789) (Baker's yeast).